A 165-amino-acid polypeptide reads, in one-letter code: MSEYRRYYIKGGTWFFTVNLRNRRSQLLTTQYQMLRHAIIKVKRDRPFEINAWVVLPEHMHCIWTLPEGDDDFSSRWREIKKQFTHACGLKNIWQPRFWEHAIRNTKDYRHHVDYIYINPVKHGWVKQVSDWPFSTFHRDVARGLYPIDWAGDVTDFSAGERIIS.

Belongs to the transposase 17 family. RAYT subfamily. Monomer.

Its activity is regulated as follows. Cleavage occurs in the presence of magnesium, but is much more pronounced with manganese. Transposase that is always flanked by repeated extragenic palindrome (REP) sequences, which are clustered in structures called bacterial interspersed mosaic elements (BIMEs). RayT catalyzes cleavage and recombination of BIMEs. Binds REP sequences and cleaves BIMEs both upstream and downstream of the REP sequence. Could be important in the creation of BIME variability and amplification. This is REP-associated tyrosine transposase from Escherichia coli (strain K12).